The primary structure comprises 411 residues: LL-diaminopimelate aminotransferase (411 aa).

2 residues coordinate substrate: Tyr15 and Gly42. Residues Tyr72, 108 to 109 (SK), Tyr132, Asn187, Tyr218, and 246 to 248 (SFS) contribute to the pyridoxal 5'-phosphate site. Residues Lys109, Tyr132, and Asn187 each coordinate substrate. The residue at position 249 (Lys249) is an N6-(pyridoxal phosphate)lysine. Pyridoxal 5'-phosphate contacts are provided by Arg257 and Asn292. Substrate contacts are provided by Asn292 and Arg388.

Belongs to the class-I pyridoxal-phosphate-dependent aminotransferase family. LL-diaminopimelate aminotransferase subfamily. As to quaternary structure, homodimer. Pyridoxal 5'-phosphate serves as cofactor.

The enzyme catalyses (2S,6S)-2,6-diaminopimelate + 2-oxoglutarate = (S)-2,3,4,5-tetrahydrodipicolinate + L-glutamate + H2O + H(+). Its pathway is amino-acid biosynthesis; L-lysine biosynthesis via DAP pathway; LL-2,6-diaminopimelate from (S)-tetrahydrodipicolinate (aminotransferase route): step 1/1. In terms of biological role, involved in the synthesis of meso-diaminopimelate (m-DAP or DL-DAP), required for both lysine and peptidoglycan biosynthesis. Catalyzes the direct conversion of tetrahydrodipicolinate to LL-diaminopimelate. The polypeptide is LL-diaminopimelate aminotransferase (Cyanothece sp. (strain PCC 7425 / ATCC 29141)).